A 179-amino-acid chain; its full sequence is Protein TIFY 11a (179 aa).

The Tify domain maps to 62–97 (VDGGGQQFTIFYAGKVVVIDRCTPAMAAELMRFASA). A Jas motif is present at residues 115–140 (PIARKASLKRFLAKRKATPASARSSY). Positions 117-124 (ARKASLKR) match the Nuclear localization signal motif.

It belongs to the TIFY/JAZ family. As to quaternary structure, interacts with BHLH148. Interacts with COI1A in a coronatine-dependent manner. Interacts with COI1B in a coronatine-dependent manner. Coronatine is an analog of jasmonoyl isoleucine (JA-Ile). Interacts with RSS3. Forms a ternary complex with RSS3 and BHLH094 in the nucleus. Interacts with BHLH062 and NINJA1. Interacts with MYB30. Post-translationally, ubiquitinated. Targeted for degradation by the SCF(COI1) E3 ubiquitin ligase-proteasome pathway during jasmonate signaling.

It is found in the nucleus. Functionally, repressor of jasmonate (JA) responses. Forms a ternary complex with RSS3 and BHLH94 to negatively regulate JA-responsive genes. Acts as a positive regulator of tolerance to salt stress. Involved in salt tolerance by modulating potassium homeostasis through JA signaling and regulation of the expression of potassium ion transporter genes. Acts as a transcriptional regulator targeted by the SCF(COI1) E3 ubiquitin ligase complexes in the JA signaling pathway, and interacts with BHLH062 that may directly regulate the ion transporter genes. Acts as a positive regulator of tolerance to dehydration stress. Acts as a negative regulator of tolerance to cold stress by interacting with MYB30. This is Protein TIFY 11a from Oryza sativa subsp. japonica (Rice).